Consider the following 493-residue polypeptide: Inosine-5'-monophosphate dehydrogenase (493 aa).

CBS domains follow at residues Val97–Ile155 and Met159–Glu219. NAD(+) contacts are provided by residues Asp253 and Gly303–Gly305. K(+) contacts are provided by Gly305 and Gly307. Ser308 contributes to the IMP binding site. Cys310 is a binding site for K(+). Cys310 (thioimidate intermediate) is an active-site residue. IMP-binding positions include Asp343–Gly345, Gly366–Ser367, and Tyr390–Gly394. The Proton acceptor role is filled by Arg406. Position 421 (Glu421) interacts with IMP. K(+) is bound by residues Glu475, Ser476, and His477.

Belongs to the IMPDH/GMPR family. As to quaternary structure, homotetramer. K(+) serves as cofactor.

It carries out the reaction IMP + NAD(+) + H2O = XMP + NADH + H(+). It functions in the pathway purine metabolism; XMP biosynthesis via de novo pathway; XMP from IMP: step 1/1. Its activity is regulated as follows. Mycophenolic acid (MPA) is a non-competitive inhibitor that prevents formation of the closed enzyme conformation by binding to the same site as the amobile flap. In contrast, mizoribine monophosphate (MZP) is a competitive inhibitor that induces the closed conformation. MPA is a potent inhibitor of mammalian IMPDHs but a poor inhibitor of the bacterial enzymes. MZP is a more potent inhibitor of bacterial IMPDH. Functionally, catalyzes the conversion of inosine 5'-phosphate (IMP) to xanthosine 5'-phosphate (XMP), the first committed and rate-limiting step in the de novo synthesis of guanine nucleotides, and therefore plays an important role in the regulation of cell growth. The protein is Inosine-5'-monophosphate dehydrogenase of Streptococcus pyogenes serotype M3 (strain ATCC BAA-595 / MGAS315).